Consider the following 787-residue polypeptide: Vacuolar protein sorting-associated protein 35A (787 aa).

Residue methionine 1 is modified to N-acetylmethionine.

This sequence belongs to the VPS35 family. As to quaternary structure, component of the retromer complex which consists of VPS29 (MAG1), VPS26 (VPS26A or VPS26B), VPS35 (VPS35A or VPS35B or VPS35C), VPS5/17 (SNX1 or SNX2A or SNX2B). Component of a retromer subcomplex consisting of VPS29 (MAG1), VPS26 (VPS26A or VPS26B), VPS35 (VPS35A or VPS35B or VPS35C). Interacts with RABG3F.

It is found in the cytoplasm. The protein localises to the endosome membrane. It localises to the prevacuolar compartment membrane. Its subcellular location is the golgi apparatus. The protein resides in the trans-Golgi network membrane. In terms of biological role, plays a role in vesicular protein sorting. Component of the membrane-associated retromer complex which is essential in endosome-to-Golgi retrograde transport. Also involved in the efficient sorting of seed storage proteins. Binds alone to endosomal membranes and is required for recruitment of VPS26 and VPS29 to membrane. The VPS29-VPS26-VPS35 subcomplex may be involved in recycling of specific cargos from endosome to the plasma membrane. The chain is Vacuolar protein sorting-associated protein 35A (VPS35A) from Arabidopsis thaliana (Mouse-ear cress).